The chain runs to 282 residues: NADPH-dependent 7-cyano-7-deazaguanine reductase (282 aa).

88–90 provides a ligand contact to substrate; that stretch reads IES. 90–91 contributes to the NADPH binding site; the sequence is SK. Catalysis depends on Cys190, which acts as the Thioimide intermediate. The Proton donor role is filled by Asp197. 229 to 230 serves as a coordination point for substrate; that stretch reads HE. 258-259 serves as a coordination point for NADPH; that stretch reads RG.

The protein belongs to the GTP cyclohydrolase I family. QueF type 2 subfamily. Homodimer.

The protein localises to the cytoplasm. It carries out the reaction 7-aminomethyl-7-carbaguanine + 2 NADP(+) = 7-cyano-7-deazaguanine + 2 NADPH + 3 H(+). It functions in the pathway tRNA modification; tRNA-queuosine biosynthesis. In terms of biological role, catalyzes the NADPH-dependent reduction of 7-cyano-7-deazaguanine (preQ0) to 7-aminomethyl-7-deazaguanine (preQ1). The chain is NADPH-dependent 7-cyano-7-deazaguanine reductase from Citrobacter koseri (strain ATCC BAA-895 / CDC 4225-83 / SGSC4696).